Reading from the N-terminus, the 45-residue chain is Cytochrome b559 subunit beta (45 aa).

Residues 20-36 (WLAVHTLGVPTVFFLGA) form a helical membrane-spanning segment. A heme-binding site is contributed by His24.

Belongs to the PsbE/PsbF family. In terms of assembly, heterodimer of an alpha subunit and a beta subunit. PSII is composed of 1 copy each of membrane proteins PsbA, PsbB, PsbC, PsbD, PsbE, PsbF, PsbH, PsbI, PsbJ, PsbK, PsbL, PsbM, PsbT, PsbX, PsbY, PsbZ, Psb30/Ycf12, peripheral proteins PsbO, CyanoQ (PsbQ), PsbU, PsbV and a large number of cofactors. It forms dimeric complexes. Requires heme b as cofactor.

The protein resides in the cellular thylakoid membrane. This b-type cytochrome is tightly associated with the reaction center of photosystem II (PSII). PSII is a light-driven water:plastoquinone oxidoreductase that uses light energy to abstract electrons from H(2)O, generating O(2) and a proton gradient subsequently used for ATP formation. It consists of a core antenna complex that captures photons, and an electron transfer chain that converts photonic excitation into a charge separation. The protein is Cytochrome b559 subunit beta of Nostoc punctiforme (strain ATCC 29133 / PCC 73102).